Here is a 318-residue protein sequence, read N- to C-terminus: UDP-3-O-acylglucosamine N-acyltransferase 1 (318 aa).

The Proton acceptor role is filled by histidine 230.

The protein belongs to the transferase hexapeptide repeat family. LpxD subfamily. As to quaternary structure, homotrimer.

The catalysed reaction is a UDP-3-O-[(3R)-3-hydroxyacyl]-alpha-D-glucosamine + a (3R)-hydroxyacyl-[ACP] = a UDP-2-N,3-O-bis[(3R)-3-hydroxyacyl]-alpha-D-glucosamine + holo-[ACP] + H(+). The protein operates within bacterial outer membrane biogenesis; LPS lipid A biosynthesis. Functionally, catalyzes the N-acylation of UDP-3-O-acylglucosamine using 3-hydroxyacyl-ACP as the acyl donor. Is involved in the biosynthesis of lipid A, a phosphorylated glycolipid that anchors the lipopolysaccharide to the outer membrane of the cell. This is UDP-3-O-acylglucosamine N-acyltransferase 1 from Sulfurimonas denitrificans (strain ATCC 33889 / DSM 1251) (Thiomicrospira denitrificans (strain ATCC 33889 / DSM 1251)).